A 636-amino-acid polypeptide reads, in one-letter code: Protein SOSEKI 2 (636 aa).

The DIX-like oligomerization domain stretch occupies residues 9–103 (HKIEVIYLLS…YVLKALEVMD (95 aa)). Disordered stretches follow at residues 164 to 188 (VHNN…SRVP), 281 to 304 (HGRL…TVDI), 340 to 393 (VEGS…TSAK), and 499 to 524 (LGSG…VSRP). Polar residues-rich tracts occupy residues 375 to 390 (SSKS…TYET) and 499 to 510 (LGSGQASESFSP).

It belongs to the SOSEKI family. Homodimer. Forms long polymer filaments with other SOKs proteins polymers crucial for polar localization and biological activity.

Its subcellular location is the cell membrane. Its function is as follows. SOSEKI proteins locally interpret global polarity cues and can influence cell division orientation to coordinate cell polarization relative to body axes. The chain is Protein SOSEKI 2 from Physcomitrium patens (Spreading-leaved earth moss).